Consider the following 312-residue polypeptide: D-alanine--D-alanine ligase (312 aa).

Residues 108–308 enclose the ATP-grasp domain; that stretch reads KLVWQQTGIP…YSELVVKVLS (201 aa). Residue 138-193 coordinates ATP; that stretch reads VAKLGVPLFVKPASEGSSVAVEKVKSADALPAALEEAAKHDKIVIVEKSIEGGGEY. Mg(2+) contacts are provided by Asp-262, Glu-275, and Asn-277.

Belongs to the D-alanine--D-alanine ligase family. Mg(2+) serves as cofactor. Mn(2+) is required as a cofactor.

It is found in the cytoplasm. The catalysed reaction is 2 D-alanine + ATP = D-alanyl-D-alanine + ADP + phosphate + H(+). It participates in cell wall biogenesis; peptidoglycan biosynthesis. Cell wall formation. This Burkholderia mallei (strain NCTC 10247) protein is D-alanine--D-alanine ligase.